The sequence spans 198 residues: Recombination protein RecR (198 aa).

A C4-type zinc finger spans residues 57–72 (CSVCGHITDQDPCYIC). In terms of domain architecture, Toprim spans 80–175 (SVICVVQDPK…KLSRIAHGLP (96 aa)).

The protein belongs to the RecR family.

Functionally, may play a role in DNA repair. It seems to be involved in an RecBC-independent recombinational process of DNA repair. It may act with RecF and RecO. In Bacillus licheniformis (strain ATCC 14580 / DSM 13 / JCM 2505 / CCUG 7422 / NBRC 12200 / NCIMB 9375 / NCTC 10341 / NRRL NRS-1264 / Gibson 46), this protein is Recombination protein RecR.